We begin with the raw amino-acid sequence, 318 residues long: C1GALT1-specific chaperone 1 (318 aa).

Topologically, residues M1–S6 are cytoplasmic. A helical; Signal-anchor for type II membrane protein transmembrane segment spans residues S7 to G26. Over H27 to D318 the chain is Lumenal.

It belongs to the glycosyltransferase 31 family. Beta3-Gal-T subfamily. Associates with core 1 beta-3-galactosyltransferase (C1GALT1), probably not with the soluble active form.

The protein resides in the membrane. Its function is as follows. Probable chaperone required for the generation of 1 O-glycan Gal-beta1-3GalNAc-alpha1-Ser/Thr (T antigen), which is a precursor for many extended O-glycans in glycoproteins. Probably acts as a specific molecular chaperone assisting the folding/stability of core 1 beta-3-galactosyltransferase (C1GALT1). The sequence is that of C1GALT1-specific chaperone 1 (C1GALT1C1) from Bos taurus (Bovine).